The sequence spans 452 residues: Phosphoglucosamine mutase (452 aa).

The active-site Phosphoserine intermediate is the Ser108. Residues Ser108, Asp247, Asp249, and Asp251 each coordinate Mg(2+). Ser108 is subject to Phosphoserine.

Belongs to the phosphohexose mutase family. Mg(2+) is required as a cofactor. Post-translationally, activated by phosphorylation.

It catalyses the reaction alpha-D-glucosamine 1-phosphate = D-glucosamine 6-phosphate. In terms of biological role, catalyzes the conversion of glucosamine-6-phosphate to glucosamine-1-phosphate. This Paraburkholderia phytofirmans (strain DSM 17436 / LMG 22146 / PsJN) (Burkholderia phytofirmans) protein is Phosphoglucosamine mutase.